An 837-amino-acid chain; its full sequence is MSRKLFSVLLVGLMLMTSLLVTISSTSAASLPTMPPSGYDQVRNGVPRGQVVNISYFSTATNSTRPARVYLPPGYSKDKKYSVLYLLHGIGGSENDWFEGGGRANVIADNLIAEGKIKPLIIVTPNTNAAGPGIADGYENFTKDLLNSLIPYIESNYSVYTDREHRAIAGLSMGGGQSFNIGLTNLDKFAYIGPISAAPNTYPNERLFPDGGKAAREKLKLLFIACGTNDSLIGFGQRVHEYCVANNINHVYWLIQGGGHDFNVWKPGLWNFLQMADEAGLTRDGNTPVPTPSPKPANTRIEAEDYDGINSSSIEIIGVPPEGGRGIGYITSGDYLVYKSIDFGNGATSFKAKVANANTSNIELRLNGPNGTLIGTLSVKSTGDWNTYEEQTCSISKVTGINDLYLVFKGPVNIDWFTFGVESSSTGLGDLNGDGNINSSDLQALKRHLLGISPLTGEALLRADVNRSGKVDSTDYSVLKRYILRIITEFPGQGDVQTPNPSVTPTQTPIPTISGNALRDYAEARGIKIGTCVNYPFYNNSDPTYNSILQREFSMVVCENEMKFDALQPRQNVFDFSKGDQLLAFAERNGMQMRGHTLIWHNQNPSWLTNGNWNRDSLLAVMKNHITTVMTHYKGKIVEWDVANECMDDSGNGLRSSIWRNVIGQDYLDYAFRYAREADPDALLFYNDYNIEDLGPKSNAVFNMIKSMKERGVPIDGVGFQCHFINGMSPEYLASIDQNIKRYAEIGVIVSFTEIDIRIPQSENPATAFQVQANNYKELMKICLANPNCNTFVMWGFTDKYTWIPGTFPGYGNPLIYDSNYNPKPAYNAIKEALMGY.

A signal peptide spans 1–28 (MSRKLFSVLLVGLMLMTSLLVTISSTSA). One can recognise a CBM6 domain in the interval 299 to 420 (TRIEAEDYDG…PVNIDWFTFG (122 aa)). The region spanning 424–492 (SSTGLGDLNG…ILRIITEFPG (69 aa)) is the Dockerin domain. Residues 512 to 833 (TISGNALRDY…KPAYNAIKEA (322 aa)) form the GH10 domain. The active-site Proton donor is Glu645. The Nucleophile role is filled by Glu754. Cys783 and Cys789 form a disulfide bridge.

Belongs to the glycosyl hydrolase 10 (cellulase F) family.

It carries out the reaction Endohydrolysis of (1-&gt;4)-beta-D-xylosidic linkages in xylans.. This Acetivibrio thermocellus (strain ATCC 27405 / DSM 1237 / JCM 9322 / NBRC 103400 / NCIMB 10682 / NRRL B-4536 / VPI 7372) (Clostridium thermocellum) protein is Endo-1,4-beta-xylanase Z (xynZ).